Here is a 657-residue protein sequence, read N- to C-terminus: Keratinocyte proline-rich protein (657 aa).

Disordered stretches follow at residues 285-320 (QGTYGSYTSQRRSQSTSRCLPPRRLQPSYRSCSPPR), 425-493 (HPFP…PSPE), and 517-568 (QPVP…CGQP). Over residues 292–302 (TSQRRSQSTSR) the composition is skewed to low complexity. The span at 434-444 (QHLDRSPESSR) shows a compositional bias: basic and acidic residues. Position 442 is a phosphoserine (Ser-442). 3 stretches are compositionally biased toward pro residues: residues 449 to 493 (VPAP…PSPE), 517 to 530 (QPVPHPAPRPVPRP), and 539 to 561 (GPRPQPCPLPHPEPMPRPAPCSS).

Its subcellular location is the cytoplasm. This chain is Keratinocyte proline-rich protein, found in Mus musculus (Mouse).